The sequence spans 96 residues: UPF0251 protein Spea_3639 (96 aa).

Belongs to the UPF0251 family.

This chain is UPF0251 protein Spea_3639, found in Shewanella pealeana (strain ATCC 700345 / ANG-SQ1).